Reading from the N-terminus, the 383-residue chain is Insulinoma-associated protein 1a (383 aa).

The tract at residues 1–20 is SNAG domain; that stretch reads MPRGFLVKRNKKATPVSYRV. Disordered stretches follow at residues 99–141 and 229–269; these read PVDL…AMRK and RWHK…SEDG. Polar residues predominate over residues 105–120; the sequence is GTSNSNRTGTTVTTKR. Basic residues predominate over residues 130 to 140; that stretch reads KPASKKAKAMR. The C2H2-type 1 zinc-finger motif lies at 209-231; the sequence is YRCPECDKLFSCPANLASHRRWH. Over residues 244–256 the composition is skewed to basic and acidic residues; it reads APEKEETSSDRDT. The segment at 271-295 adopts a C2H2-type 2; degenerate zinc-finger fold; it reads YDCQHCGKKFKRQAYLKKHVTAHHD. 2 consecutive C2H2-type zinc fingers follow at residues 314-337 and 342-365; these read HLCPVCGENFPSRMSQERHIRLQH and YPCKYCPAMFYSSPGLTRHINKCH.

This sequence belongs to the INSM1 family.

The protein resides in the nucleus. Functionally, may act as a transcriptional regulator. May play a role in neurogenesis and neuroendocrine cell differentiation during embryonic development. This is Insulinoma-associated protein 1a (insm1a) from Danio rerio (Zebrafish).